Here is a 272-residue protein sequence, read N- to C-terminus: Catechol O-methyltransferase (272 aa).

Over 1 to 6 (MLEAPP) the chain is Cytoplasmic. The helical; Signal-anchor for type II membrane protein transmembrane segment at 7–27 (LLLVAGGVGLALLALRWLATT) threads the bilayer. Over 28 to 272 (DLQFFGRAFI…YKGLSGPARP (245 aa)) the chain is Extracellular. S-adenosyl-L-methionine-binding positions include V93, E115, S123, E141, 168–171 (GASQ), S170, and D192. Position 192 (D192) interacts with Mg(2+). K195 serves as a coordination point for substrate. The Mg(2+) site is built by D220 and N221. Substrate contacts are provided by N221 and E250. A Phosphoserine modification is found at S267.

It belongs to the class I-like SAM-binding methyltransferase superfamily. Cation-dependent O-methyltransferase family. Requires Mg(2+) as cofactor.

The protein resides in the cytoplasm. Its subcellular location is the cell membrane. The enzyme catalyses a catechol + S-adenosyl-L-methionine = a guaiacol + S-adenosyl-L-homocysteine + H(+). It catalyses the reaction 2-hydroxyestrone + S-adenosyl-L-methionine = 2-hydroxy-3-methoxy-estrone + S-adenosyl-L-homocysteine + H(+). The catalysed reaction is 4-hydroxyestrone + S-adenosyl-L-methionine = 4-methoxyestrone + S-adenosyl-L-homocysteine + H(+). It carries out the reaction 2-hydroxyestrone + S-adenosyl-L-methionine = 2-methoxyestrone + S-adenosyl-L-homocysteine + H(+). The enzyme catalyses 4-hydroxy-17beta-estradiol + S-adenosyl-L-methionine = 4-methoxy-17beta-estradiol + S-adenosyl-L-homocysteine + H(+). It catalyses the reaction 2-hydroxy-17beta-estradiol + S-adenosyl-L-methionine = 2-hydroxy-3-methoxy-17beta-estradiol + S-adenosyl-L-homocysteine + H(+). The catalysed reaction is 2-hydroxy-17beta-estradiol + S-adenosyl-L-methionine = 2-methoxy-17beta-estradiol + S-adenosyl-L-homocysteine + H(+). Catalyzes the O-methylation, and thereby the inactivation, of catecholamine neurotransmitters and catechol hormones. Also shortens the biological half-lives of certain neuroactive drugs, like L-DOPA, alpha-methyl DOPA and isoproterenol. This Bos taurus (Bovine) protein is Catechol O-methyltransferase (COMT).